The sequence spans 121 residues: Small ribosomal subunit protein bS6 (121 aa).

The protein belongs to the bacterial ribosomal protein bS6 family.

Binds together with bS18 to 16S ribosomal RNA. The sequence is that of Small ribosomal subunit protein bS6 from Rickettsia peacockii (strain Rustic).